A 377-amino-acid polypeptide reads, in one-letter code: Anhydro-N-acetylmuramic acid kinase (377 aa).

18–25 (GTSADGID) contacts ATP.

Belongs to the anhydro-N-acetylmuramic acid kinase family.

It catalyses the reaction 1,6-anhydro-N-acetyl-beta-muramate + ATP + H2O = N-acetyl-D-muramate 6-phosphate + ADP + H(+). It participates in amino-sugar metabolism; 1,6-anhydro-N-acetylmuramate degradation. It functions in the pathway cell wall biogenesis; peptidoglycan recycling. Functionally, catalyzes the specific phosphorylation of 1,6-anhydro-N-acetylmuramic acid (anhMurNAc) with the simultaneous cleavage of the 1,6-anhydro ring, generating MurNAc-6-P. Is required for the utilization of anhMurNAc either imported from the medium or derived from its own cell wall murein, and thus plays a role in cell wall recycling. The protein is Anhydro-N-acetylmuramic acid kinase of Xanthomonas oryzae pv. oryzae (strain MAFF 311018).